Consider the following 117-residue polypeptide: Prefoldin subunit beta (117 aa).

Belongs to the prefoldin subunit beta family. As to quaternary structure, heterohexamer of two alpha and four beta subunits.

Its subcellular location is the cytoplasm. Its function is as follows. Molecular chaperone capable of stabilizing a range of proteins. Seems to fulfill an ATP-independent, HSP70-like function in archaeal de novo protein folding. This Methanococcoides burtonii (strain DSM 6242 / NBRC 107633 / OCM 468 / ACE-M) protein is Prefoldin subunit beta.